The primary structure comprises 377 residues: EPS I polysaccharide export outer membrane protein EpsA (377 aa).

Positions 1–23 are cleaved as a signal peptide; the sequence is MFVSIPSIRKTVMSLCAVPLMAA. The N-palmitoyl cysteine moiety is linked to residue cysteine 24. Cysteine 24 carries S-diacylglycerol cysteine lipidation.

Belongs to the BexD/CtrA/VexA family.

It localises to the cell outer membrane. In terms of biological role, probably involved in polymerization and/or export of exopolysaccharide EPS I which functions as a virulence factor. This is EPS I polysaccharide export outer membrane protein EpsA (epsA) from Ralstonia solanacearum (Pseudomonas solanacearum).